A 1158-amino-acid chain; its full sequence is cGMP-specific 3',5'-cyclic phosphodiesterase (1158 aa).

2 disordered regions span residues 1-137 and 195-216; these read MTDV…SQHD and SPTVQQKSPRSLSNSSASSIPE. Residues 30–71 are compositionally biased toward low complexity; that stretch reads ATTSAAASASSSQAKPLTNGAKKAATAAAAAGAEEGGASASN. Polar residues predominate over residues 108-135; the sequence is GSTSKSSSIHTQTSQQERAGRPTSSASQ. Low complexity predominate over residues 202–215; it reads SPRSLSNSSASSIP. GAF domains are found at residues 242–394 and 426–640; these read DIDV…GIGI and NLEC…GLGI. Positions 670–993 constitute a PDEase domain; that stretch reads SQDQTEKLTQ…RNWQDLAEKV (324 aa). His-746 functions as the Proton donor in the catalytic mechanism. 4 residues coordinate a divalent metal cation: His-750, His-786, Asp-787, and Asp-897. Disordered regions lie at residues 1034-1065 and 1097-1158; these read QSQQSQHGSEDSHTPEHQRSGSRLSMKKTGAL and VSED…CALL. A compositionally biased stretch (basic and acidic residues) spans 1041–1052; sequence GSEDSHTPEHQR. Positions 1114–1130 are enriched in low complexity; that stretch reads AAGSMGRMSASSSTSSA. A compositionally biased stretch (basic residues) spans 1148–1158; the sequence is SKKRSKLCALL. Cys-1155 bears the Cysteine methyl ester mark. The S-farnesyl cysteine moiety is linked to residue Cys-1155. Positions 1156–1158 are cleaved as a propeptide — removed in mature form; sequence ALL.

It belongs to the cyclic nucleotide phosphodiesterase family. As to quaternary structure, interacts with PrBP. Requires a divalent metal cation as cofactor.

The protein localises to the cell membrane. The catalysed reaction is 3',5'-cyclic GMP + H2O = GMP + H(+). Its function is as follows. Has a role regulating cGMP transport in Malpighian tubule principal cells. The polypeptide is cGMP-specific 3',5'-cyclic phosphodiesterase (Drosophila ananassae (Fruit fly)).